Reading from the N-terminus, the 343-residue chain is Methionine import ATP-binding protein MetN 3 (343 aa).

Positions 2–241 constitute an ABC transporter domain; it reads IELSNITKVF…PKTPLAQKFI (240 aa). Residue 38–45 participates in ATP binding; it reads GASGAGKS.

The protein belongs to the ABC transporter superfamily. Methionine importer (TC 3.A.1.24) family. The complex is composed of two ATP-binding proteins (MetN), two transmembrane proteins (MetI) and a solute-binding protein (MetQ).

Its subcellular location is the cell inner membrane. The catalysed reaction is L-methionine(out) + ATP + H2O = L-methionine(in) + ADP + phosphate + H(+). It catalyses the reaction D-methionine(out) + ATP + H2O = D-methionine(in) + ADP + phosphate + H(+). In terms of biological role, part of the ABC transporter complex MetNIQ involved in methionine import. Responsible for energy coupling to the transport system. In Pectobacterium atrosepticum (strain SCRI 1043 / ATCC BAA-672) (Erwinia carotovora subsp. atroseptica), this protein is Methionine import ATP-binding protein MetN 3.